The following is a 549-amino-acid chain: MKNINPTTTNAWKALQQHHKTQSAVTIQQLFAQEKDRFTDYSLSFNNEVLVDFSKNNVTKETLGLLRQLAQECALSEAVDAMFSGAKINKTEDRAVLHTALRNRSNSPVLVDGKDVMPEVNAVLAKMKDFCHRVISGEWKGYTGKAITDVVNIGIGGSDLGPYMVTEALRPYKNHLNLHFVSNVDGTHIAETLKKVNPETTLFLVASKTFTTQETMTNAHSARNWFLATAKDESHVAKHFAALSTNSKAVAEFGIDTNNMFEFWDWVGGRYSLWSAIGLSIALSIGFEHFEALLAGAHEMDKHFRTAPIEQNIPTTLALIGLWNTNFLGAQTEAILPYDQYLHRFAAYFQQGNMESNGKYVDRNGEVIDNYQTGPIIWGEPGTNGQHAFYQLIHQGTTLIPCDFIAPAQTHNPLADHHEKLLSNFFAQTEALAFGKTKEEVEAEFVKAGKSLDEVKEVVPFKVFTGNKPTNSILVQKITPFTLGALIAMYEHKIFVQGVMFNIYSFDQWGVELGKQLANRILPELANRETITTHDSSTNGLINQYKQWR.

Residue glutamate 355 is the Proton donor of the active site. Residues histidine 387 and lysine 515 contribute to the active site.

The protein belongs to the GPI family.

Its subcellular location is the cytoplasm. It catalyses the reaction alpha-D-glucose 6-phosphate = beta-D-fructose 6-phosphate. Its pathway is carbohydrate biosynthesis; gluconeogenesis. It participates in carbohydrate degradation; glycolysis; D-glyceraldehyde 3-phosphate and glycerone phosphate from D-glucose: step 2/4. Its function is as follows. Catalyzes the reversible isomerization of glucose-6-phosphate to fructose-6-phosphate. This Pasteurella multocida (strain Pm70) protein is Glucose-6-phosphate isomerase.